The sequence spans 589 residues: Muscarinic acetylcholine receptor M3 (589 aa).

The Extracellular segment spans residues 1–66 (MTLHSNSTTS…DPLGGHTIWQ (66 aa)). Residues asparagine 6, asparagine 15, asparagine 41, asparagine 48, and asparagine 52 are each glycosylated (N-linked (GlcNAc...) asparagine). Residues 67–90 (VVFIAFLTGFLALVTIIGNILVIV) traverse the membrane as a helical segment. Topologically, residues 91-103 (AFKVNKQLKTVNN) are cytoplasmic. The chain crosses the membrane as a helical span at residues 104–129 (YFLLSLACADLIIGVISMNLFTTYII). Topologically, residues 130–141 (MNRWALGNLACD) are extracellular. A disulfide bond links cysteine 140 and cysteine 220. Residues 142-163 (LWLSIDYVASNASVMNLLVISF) form a helical membrane-spanning segment. Residues 164–183 (DRYFSITRPLTYRAKRTTKR) are Cytoplasmic-facing. A helical transmembrane segment spans residues 184–205 (AGVMIGLAWVISFVLWAPAILF). Residues 206-228 (WQYFVGKRTVPPGECFIQFLSEP) lie on the Extracellular side of the membrane. The helical transmembrane segment at 229–251 (TITFGTAIAAFYMPVTIMTILYW) threads the bilayer. Topologically, residues 252-490 (RIYKETEKRT…SLIKEKKAAQ (239 aa)) are cytoplasmic. The Basolateral sorting signal signature appears at 274–280 (AEAENFV). The tract at residues 323-356 (AEQMDQDHSSSDSWNNNDAAASLENSASSDEEDI) is disordered. The segment covering 333–344 (SDSWNNNDAAAS) has biased composition (low complexity). Serine 384 bears the Phosphoserine mark. The chain crosses the membrane as a helical span at residues 491 to 513 (TLSAILLAFIITWTPYNIMVLVN). The Extracellular segment spans residues 514-525 (TFCDSCIPKTYW). Residues cysteine 516 and cysteine 519 are joined by a disulfide bond. A helical membrane pass occupies residues 526-545 (NLGYWLCYINSTVNPVCYAL). Over 546-589 (CNKTFRTTFKTLLLCQCDKRKRRKQQYQQRQSVIFHKRVPEQAL) the chain is Cytoplasmic.

This sequence belongs to the G-protein coupled receptor 1 family. Muscarinic acetylcholine receptor subfamily. CHRM3 sub-subfamily. Homodimer; the dimers can form tetramers. Interacts with NALCN. Interacts with TMEM147.

Its subcellular location is the cell membrane. It is found in the postsynaptic cell membrane. The protein resides in the basolateral cell membrane. It localises to the endoplasmic reticulum membrane. The muscarinic acetylcholine receptor mediates various cellular responses, including inhibition of adenylate cyclase, breakdown of phosphoinositides and modulation of potassium channels through the action of G proteins. Primary transducing effect is Pi turnover. This chain is Muscarinic acetylcholine receptor M3 (Chrm3), found in Rattus norvegicus (Rat).